A 277-amino-acid polypeptide reads, in one-letter code: 3-methyl-2-oxobutanoate hydroxymethyltransferase (277 aa).

Residues aspartate 58 and aspartate 97 each contribute to the Mg(2+) site. 3-methyl-2-oxobutanoate-binding positions include 58–59 (DS), aspartate 97, and lysine 127. Glutamate 129 contributes to the Mg(2+) binding site. Glutamate 195 acts as the Proton acceptor in catalysis.

It belongs to the PanB family. Homodecamer; pentamer of dimers. Mg(2+) is required as a cofactor.

Its subcellular location is the cytoplasm. It carries out the reaction 3-methyl-2-oxobutanoate + (6R)-5,10-methylene-5,6,7,8-tetrahydrofolate + H2O = 2-dehydropantoate + (6S)-5,6,7,8-tetrahydrofolate. It functions in the pathway cofactor biosynthesis; (R)-pantothenate biosynthesis; (R)-pantoate from 3-methyl-2-oxobutanoate: step 1/2. Its function is as follows. Catalyzes the reversible reaction in which hydroxymethyl group from 5,10-methylenetetrahydrofolate is transferred onto alpha-ketoisovalerate to form ketopantoate. The chain is 3-methyl-2-oxobutanoate hydroxymethyltransferase from Leifsonia xyli subsp. xyli (strain CTCB07).